We begin with the raw amino-acid sequence, 985 residues long: Rho guanine nucleotide exchange factor 2 (985 aa).

Positions 1–32 are disordered; the sequence is MSRIESLTRARIDRSKEQATKTREKEKMKEAK. The segment at 39–86 adopts a Phorbol-ester/DAG-type zinc-finger fold; it reads GHLFTTISVSGMTMCYACNKSITAKEALICPTCNVTIHNRCKDTLANC. 5 positions are modified to phosphoserine: Ser109, Ser122, Ser129, Ser133, and Ser137. The segment at 131–161 is interaction with DYNLT1; it reads RQSLLGSRRGLSSLSLAKSVSTTNIAGHFND. Ser143 is subject to Phosphoserine; by PAK4. 5 positions are modified to phosphoserine: Ser151, Ser163, Ser172, Ser174, and Ser177. Positions 236 to 433 constitute a DH domain; that stretch reads KKQDVIYELI…KELLSNVDQD (198 aa). Lys354 bears the N6-acetyllysine mark. The PH domain occupies 473 to 572; that stretch reads KLIHDGCLLW…WIRVIQQSVR (100 aa). Residues 591–615 are a coiled coil; sequence LRRIKTKLQQKNQALVELLQMNVEL. Ser646 and Ser649 each carry phosphoserine. The residue at position 680 (Thr680) is a Phosphothreonine; by MAPK1 or MAPK3. Phosphoserine is present on residues Ser692, Ser710, and Ser781. Thr795 is subject to Phosphothreonine. A coiled-coil region spans residues 797 to 866; sequence EKQATELALL…RQLAALGQNE (70 aa). Ser885 is subject to Phosphoserine. 2 disordered regions span residues 890 to 909 and 918 to 985; these read DALY…DRLD and HRPF…ASES. At Tyr893 the chain carries Phosphotyrosine. Ser895 is subject to Phosphoserine; by PAK4. Positions 919-938 are enriched in basic and acidic residues; it reads RPFDDREAQELGSPEDRLQD. Phosphoserine occurs at positions 931, 939, and 940. Acidic residues predominate over residues 940–949; it reads SDPDTCSEEE. Phosphothreonine is present on Thr944. Residues Ser946, Ser951, Ser952, Ser955, and Ser959 each carry the phosphoserine modification.

In terms of assembly, found in a complex composed at least of ARHGEF2, NOD2 and RIPK2. Interacts with RIPK2; the interaction mediates tyrosine phosphorylation of RIPK2 by Src kinase CSK. Interacts with RIPK1 and RIPK3. Interacts with YWHAZ/14-3-3 zeta; when phosphorylated at Ser-885. Interacts with the kinases PAK4, AURKA and MAPK1. Interacts with RHOA and RAC1. Interacts with NOD1. Interacts (via the N- terminal zinc finger) with CAPN6 (via domain II). Interacts with DYNLT1. Phosphorylation of Ser-885 by PAK1 induces binding to protein YWHAZ, promoting its relocation to microtubules and the inhibition of its activity. Phosphorylated by AURKA and CDK1 during mitosis, which negatively regulates its activity. Phosphorylation by MAPK1 or MAPK3 increases nucleotide exchange activity. Phosphorylation by PAK4 releases GEF-H1 from the microtubules. Phosphorylated on serine, threonine and tyrosine residues in a RIPK2-dependent manner.

Its subcellular location is the cytoplasm. It is found in the cytoskeleton. The protein resides in the cell junction. The protein localises to the tight junction. It localises to the golgi apparatus. Its subcellular location is the spindle. It is found in the cytoplasmic vesicle. Activates Rho-GTPases by promoting the exchange of GDP for GTP. May be involved in epithelial barrier permeability, cell motility and polarization, dendritic spine morphology, antigen presentation, leukemic cell differentiation, cell cycle regulation, innate immune response, and cancer. Binds Rac-GTPases, but does not seem to promote nucleotide exchange activity toward Rac-GTPases. May stimulate instead the cortical activity of Rac. Inactive toward CDC42, TC10, or Ras-GTPases. Forms an intracellular sensing system along with NOD1 for the detection of microbial effectors during cell invasion by pathogens. Involved in innate immune signaling transduction pathway promoting cytokine IL6/interleukin-6 and TNF-alpha secretion in macrophage upon stimulation by bacterial peptidoglycans; acts as a signaling intermediate between NOD2 receptor and RIPK2 kinase. Contributes to the tyrosine phosphorylation of RIPK2 through Src tyrosine kinase leading to NF-kappaB activation by NOD2. Overexpression activates Rho-, but not Rac-GTPases, and increases paracellular permeability. Involved in neuronal progenitor cell division and differentiation. Involved in the migration of precerebellar neurons. This Rattus norvegicus (Rat) protein is Rho guanine nucleotide exchange factor 2 (Arhgef2).